The chain runs to 483 residues: 6-phosphogluconate dehydrogenase, decarboxylating (483 aa).

NADP(+)-binding positions include 10-15 (GLAVMG) and 33-35 (NRT). K38 carries the N6-acetyllysine modification. The residue at position 57 (S57) is a Phosphoserine. K59 carries the N6-acetyllysine modification. Residues 75-77 (VKA) and N103 contribute to the NADP(+) site. Residues N103 and 129–131 (SGG) contribute to the substrate site. The residue at position 129 (S129) is a Phosphoserine. Residue K184 is the Proton acceptor of the active site. Residue 187–188 (HN) coordinates substrate. The active-site Proton donor is E191. Substrate-binding residues include Y192, K261, R288, R447, and H453. Position 478-481 (478-481 (SSSY)) interacts with NADP(+).

The protein belongs to the 6-phosphogluconate dehydrogenase family. Homodimer.

It is found in the cytoplasm. The catalysed reaction is 6-phospho-D-gluconate + NADP(+) = D-ribulose 5-phosphate + CO2 + NADPH. The protein operates within carbohydrate degradation; pentose phosphate pathway; D-ribulose 5-phosphate from D-glucose 6-phosphate (oxidative stage): step 3/3. Catalyzes the oxidative decarboxylation of 6-phosphogluconate to ribulose 5-phosphate and CO(2), with concomitant reduction of NADP to NADPH. The sequence is that of 6-phosphogluconate dehydrogenase, decarboxylating (Pgd) from Mus musculus (Mouse).